A 254-amino-acid chain; its full sequence is Ribosomal RNA small subunit methyltransferase G (254 aa).

Residues methionine 1–proline 21 form a disordered region. Positions arginine 9–proline 21 are enriched in low complexity. S-adenosyl-L-methionine-binding positions include glycine 90, leucine 95, alanine 142–glutamate 143, and arginine 157. The tract at residues glycine 230 to arginine 254 is disordered. Basic residues predominate over residues alanine 244–arginine 254.

It belongs to the methyltransferase superfamily. RNA methyltransferase RsmG family.

The protein resides in the cytoplasm. In terms of biological role, specifically methylates the N7 position of guanine in position 518 of 16S rRNA. This Kineococcus radiotolerans (strain ATCC BAA-149 / DSM 14245 / SRS30216) protein is Ribosomal RNA small subunit methyltransferase G.